Reading from the N-terminus, the 190-residue chain is Holliday junction branch migration complex subunit RuvA (190 aa).

The segment at Met-1–Ala-65 is domain I. Residues Asn-66–Leu-137 are domain II. The segment at Leu-137–Ala-141 is flexible linker. The interval Ala-142–Lys-190 is domain III.

Belongs to the RuvA family. In terms of assembly, homotetramer. Forms an RuvA(8)-RuvB(12)-Holliday junction (HJ) complex. HJ DNA is sandwiched between 2 RuvA tetramers; dsDNA enters through RuvA and exits via RuvB. An RuvB hexamer assembles on each DNA strand where it exits the tetramer. Each RuvB hexamer is contacted by two RuvA subunits (via domain III) on 2 adjacent RuvB subunits; this complex drives branch migration. In the full resolvosome a probable DNA-RuvA(4)-RuvB(12)-RuvC(2) complex forms which resolves the HJ.

Its subcellular location is the cytoplasm. The RuvA-RuvB-RuvC complex processes Holliday junction (HJ) DNA during genetic recombination and DNA repair, while the RuvA-RuvB complex plays an important role in the rescue of blocked DNA replication forks via replication fork reversal (RFR). RuvA specifically binds to HJ cruciform DNA, conferring on it an open structure. The RuvB hexamer acts as an ATP-dependent pump, pulling dsDNA into and through the RuvAB complex. HJ branch migration allows RuvC to scan DNA until it finds its consensus sequence, where it cleaves and resolves the cruciform DNA. The polypeptide is Holliday junction branch migration complex subunit RuvA (Anaplasma marginale (strain Florida)).